A 266-amino-acid chain; its full sequence is BTB/POZ domain-containing protein KCTD2 (266 aa).

Alanine 2 carries the N-acetylalanine modification. Residues 38-79 are disordered; it reads GRHPADTAASPPPPRTAGARARTSGADGRRRGRPLGPAQRGR. Low complexity predominate over residues 53–63; that stretch reads TAGARARTSGA. Positions 76–174 constitute a BTB domain; sequence QRGRYLLRDT…LVKERIRDNE (99 aa).

The polypeptide is BTB/POZ domain-containing protein KCTD2 (Kctd2) (Mus musculus (Mouse)).